The primary structure comprises 226 residues: Peroxynitrite isomerase 2 (226 aa).

Positions 73 to 79 (GVWRGEG) match the GXWXGXG motif. Residues lysine 189 and histidine 216 each coordinate heme b.

Belongs to the nitrobindin family. Homodimer. Requires heme b as cofactor.

The catalysed reaction is peroxynitrite = nitrate. The protein operates within nitrogen metabolism. Its function is as follows. Heme-binding protein able to scavenge peroxynitrite and to protect free L-tyrosine against peroxynitrite-mediated nitration, by acting as a peroxynitrite isomerase that converts peroxynitrite to nitrate. Therefore, this protein likely plays a role in peroxynitrite sensing and in the detoxification of reactive nitrogen and oxygen species (RNS and ROS, respectively). Is able to bind nitric oxide (NO) in vitro, but may act as a sensor of peroxynitrite levels in vivo. The sequence is that of Peroxynitrite isomerase 2 from Mycobacterium bovis (strain ATCC BAA-935 / AF2122/97).